The following is a 340-amino-acid chain: Dihydroorotate dehydrogenase (quinone) (340 aa).

Residues alanine 61 to lysine 65 and threonine 85 contribute to the FMN site. Lysine 65 contacts substrate. Asparagine 110–phenylalanine 114 contributes to the substrate binding site. Residues asparagine 138 and asparagine 171 each contribute to the FMN site. Asparagine 171 contributes to the substrate binding site. Serine 174 serves as the catalytic Nucleophile. Asparagine 176 lines the substrate pocket. Positions 216 and 244 each coordinate FMN. Asparagine 245–threonine 246 is a binding site for substrate. Residues glycine 267, glycine 296, and tyrosine 317–threonine 318 contribute to the FMN site.

Belongs to the dihydroorotate dehydrogenase family. Type 2 subfamily. Monomer. Requires FMN as cofactor.

Its subcellular location is the cell membrane. It catalyses the reaction (S)-dihydroorotate + a quinone = orotate + a quinol. Its pathway is pyrimidine metabolism; UMP biosynthesis via de novo pathway; orotate from (S)-dihydroorotate (quinone route): step 1/1. In terms of biological role, catalyzes the conversion of dihydroorotate to orotate with quinone as electron acceptor. The polypeptide is Dihydroorotate dehydrogenase (quinone) (Marinobacter nauticus (strain ATCC 700491 / DSM 11845 / VT8) (Marinobacter aquaeolei)).